Here is a 506-residue protein sequence, read N- to C-terminus: Aspartic proteinase A1 (506 aa).

Positions 1 to 24 (MKIYSRTVAVSLIVSFLLCFSAFA) are cleaved as a signal peptide. A propeptide spans 25 to 64 (ERNDGTFRVGLKKLKLDSKNRLAARVESKQEKPLRAYRLG) (activation peptide). A Peptidase A1 domain is found at 82–503 (YYGEIAIGTP…DFGNEQVGFA (422 aa)). Asp100 is a catalytic residue. 2 disulfides stabilise this stretch: Cys113-Cys119 and Cys278-Cys282. Asp287 is a catalytic residue. The region spanning 312–417 (VVSQQCKTVV…NELCERLPSP (106 aa)) is the Saposin B-type domain. Intrachain disulfides connect Cys317-Cys411, Cys342-Cys383, Cys348-Cys380, and Cys425-Cys462. Asn397 is a glycosylation site (N-linked (GlcNAc...) asparagine).

This sequence belongs to the peptidase A1 family. As to expression, expressed in roots, leaves, stems, petals, carpels, seed pods and dry seeds.

The protein localises to the vacuole. Involved in the breakdown of propeptides of storage proteins in protein-storage vacuoles. Possesses aspartic protease activity in vitro. This is Aspartic proteinase A1 (APA1) from Arabidopsis thaliana (Mouse-ear cress).